The chain runs to 319 residues: Protein-methionine methyltransferase laeA (319 aa).

The segment at 269–293 (REPQSGTCSVQRENGANGDRSTLSA) is disordered. Positions 270-293 (EPQSGTCSVQRENGANGDRSTLSA) are enriched in polar residues.

It belongs to the methyltransferase superfamily. LaeA methyltransferase family. As to quaternary structure, component of the heterotrimeric velvet complex composed of laeA, veA and velB; VeA acting as a bridging protein between laeA and velB.

The protein localises to the nucleus. The catalysed reaction is L-methionyl-[protein] + S-adenosyl-L-methionine = S-methyl-L-methionyl-[protein] + S-adenosyl-L-homocysteine. Its function is as follows. Methyltransferase; component of the velvet transcription factor complex that acts as a global regulator for secondary metabolite gene expression. Controls the expression of the chaetoglobosin A biosynthesis cluster via the cheR transcription factor and the subsequent production of chaetoglobosin A. Positively regulates the expression of smtA and negatively regulates the expression of velB. LaeA also regulates pigmentation and spores production. This Chaetomium globosum (strain ATCC 6205 / CBS 148.51 / DSM 1962 / NBRC 6347 / NRRL 1970) (Soil fungus) protein is Protein-methionine methyltransferase laeA.